We begin with the raw amino-acid sequence, 555 residues long: Dihydroxy-acid dehydratase (555 aa).

Residue aspartate 78 coordinates Mg(2+). Cysteine 119 contacts [2Fe-2S] cluster. Aspartate 120 and lysine 121 together coordinate Mg(2+). Position 121 is an N6-carboxylysine (lysine 121). Cysteine 195 is a binding site for [2Fe-2S] cluster. Glutamate 444 contributes to the Mg(2+) binding site. Serine 470 functions as the Proton acceptor in the catalytic mechanism.

This sequence belongs to the IlvD/Edd family. As to quaternary structure, homodimer. It depends on [2Fe-2S] cluster as a cofactor. Mg(2+) serves as cofactor.

The catalysed reaction is (2R)-2,3-dihydroxy-3-methylbutanoate = 3-methyl-2-oxobutanoate + H2O. It carries out the reaction (2R,3R)-2,3-dihydroxy-3-methylpentanoate = (S)-3-methyl-2-oxopentanoate + H2O. It participates in amino-acid biosynthesis; L-isoleucine biosynthesis; L-isoleucine from 2-oxobutanoate: step 3/4. It functions in the pathway amino-acid biosynthesis; L-valine biosynthesis; L-valine from pyruvate: step 3/4. In terms of biological role, functions in the biosynthesis of branched-chain amino acids. Catalyzes the dehydration of (2R,3R)-2,3-dihydroxy-3-methylpentanoate (2,3-dihydroxy-3-methylvalerate) into 2-oxo-3-methylpentanoate (2-oxo-3-methylvalerate) and of (2R)-2,3-dihydroxy-3-methylbutanoate (2,3-dihydroxyisovalerate) into 2-oxo-3-methylbutanoate (2-oxoisovalerate), the penultimate precursor to L-isoleucine and L-valine, respectively. The chain is Dihydroxy-acid dehydratase from Dehalococcoides mccartyi (strain ATCC BAA-2266 / KCTC 15142 / 195) (Dehalococcoides ethenogenes (strain 195)).